A 125-amino-acid chain; its full sequence is Small ribosomal subunit protein eS8 (125 aa).

This sequence belongs to the eukaryotic ribosomal protein eS8 family. Part of the 30S ribosomal subunit.

The polypeptide is Small ribosomal subunit protein eS8 (Methanosphaerula palustris (strain ATCC BAA-1556 / DSM 19958 / E1-9c)).